The primary structure comprises 275 residues: Glucosamine-6-phosphate deaminase 2 (275 aa).

Aspartate 72 acts as the Proton acceptor; for enolization step in catalysis. Residues 102–131 (NNAHILDGNASDLQAECEDFERKIKEAGGI) are a coiled coil. The active-site For ring-opening step is the aspartate 141. Histidine 143 acts as the Proton acceptor; for ring-opening step in catalysis. The active-site For ring-opening step is the glutamate 148.

The protein belongs to the glucosamine/galactosamine-6-phosphate isomerase family. Homohexamer.

The protein localises to the cytoplasm. The catalysed reaction is alpha-D-glucosamine 6-phosphate + H2O = beta-D-fructose 6-phosphate + NH4(+). Functionally, catalyzes the reversible conversion of alpha-D-glucosamine 6-phosphate (GlcN-6P) into beta-D-fructose 6-phosphate (Fru-6P) and ammonium ion, a regulatory reaction step in de novo uridine diphosphate-N-acetyl-alpha-D-glucosamine (UDP-GlcNAc) biosynthesis via hexosamine pathway. The chain is Glucosamine-6-phosphate deaminase 2 from Xenopus laevis (African clawed frog).